Reading from the N-terminus, the 236-residue chain is MQQSTNVDPQEIAKFERMAETWWDLNGEFKPLHLLNPLRLNYIDQTAGGIFGKKVLDVGCGGGILSESMARIGAVVDGLDMGEEPLEVARLHALETGVSINYVKNTAEAHREDHREYYDVVTCMEMLEHVPDPQSVIQACCDMVKPGGFVFFSTINRNIKSFVETIIGAEYLLKMLPIGTHDHNKFIKPSELMALVDNTDLLCKDALGITYNPLTGIFKYTPKVDVNYMIATQKVD.

S-adenosyl-L-methionine-binding residues include Arg39, Gly59, Asp80, and Met124.

It belongs to the methyltransferase superfamily. UbiG/COQ3 family.

The enzyme catalyses a 3-demethylubiquinol + S-adenosyl-L-methionine = a ubiquinol + S-adenosyl-L-homocysteine + H(+). It catalyses the reaction a 3-(all-trans-polyprenyl)benzene-1,2-diol + S-adenosyl-L-methionine = a 2-methoxy-6-(all-trans-polyprenyl)phenol + S-adenosyl-L-homocysteine + H(+). The protein operates within cofactor biosynthesis; ubiquinone biosynthesis. O-methyltransferase that catalyzes the 2 O-methylation steps in the ubiquinone biosynthetic pathway. The chain is Ubiquinone biosynthesis O-methyltransferase from Shewanella sp. (strain MR-4).